The following is a 199-amino-acid chain: Ribosome biogenesis protein RLP24 (199 aa).

Residues 147–182 (KEQERAESVSEQEESEEEEEDMEIDSDEEEEEQLEK) form a disordered region. Acidic residues predominate over residues 156–179 (SEQEESEEEEEDMEIDSDEEEEEQ). S172 is modified (phosphoserine).

The protein belongs to the eukaryotic ribosomal protein eL24 family. Associated with nucleolar and cytoplasmic pre-60S particles. At the end of biogenesis it dissociates from cytoplasmic pre-60S particles and is likely to be exchanged for its ribosomal homolog, RPL24. Interacts (via C-terminus) with AFG2 (hexameric form); the interaction is direct, recruits AFG2 to pre-60S ribosomal particles and promotes AFG2 ATPase activity and RLP24 release from pre-60S ribosomal particles. Interacts with NOG1; the interaction is direct.

Its subcellular location is the cytoplasm. It is found in the nucleus. Functionally, involved in the biogenesis of the 60S ribosomal subunit. Ensures the docking of NOG1 to pre-60S ribosomal particles. Activates and recruits ATPase AFG2 to cytoplasmic pre-60S ribosomal particles. The protein is Ribosome biogenesis protein RLP24 (RLP24) of Saccharomyces cerevisiae (strain ATCC 204508 / S288c) (Baker's yeast).